We begin with the raw amino-acid sequence, 76 residues long: MTAIIVYSCLTMCVIYFHLQLKTFFTKLIRFCKKCFDIFLLLIEMLKLIFYLLIINNKFYIFIIISIALITINTMI.

The next 3 helical transmembrane spans lie at 1-21 (MTAIIVYSCLTMCVIYFHLQL), 35-55 (CFDIFLLLIEMLKLIFYLLII), and 56-76 (NNKFYIFIIISIALITINTMI).

It localises to the cell membrane. This is an uncharacterized protein from Borreliella burgdorferi (strain ATCC 35210 / DSM 4680 / CIP 102532 / B31) (Borrelia burgdorferi).